Here is a 365-residue protein sequence, read N- to C-terminus: MFLKHLTLQNFRSYEELSLDFNSRLIFFVGDNGEGKTNLLEAICMLSWLKSFRESEDSNLIRWGSENYFLRGKIKGDQKESVLEVGFTAKPTVKRKLKFNQEEVKKRTDLIGKFITVLLTPMDLKIIEGGPAERRKFIDAFISSFDPFYLECLLEYNKILKHRNALLKTGISDASHLSIWDRKLIEKGVLILNKRKEIVFGLNSFYQPNLNKLSGGKDELEMIYGPNVKDKDEFVEKLGRNLGKDLRLGYTSVGIHRDDLFIGADKRDITEFGSQGQKRSTVIALKAATFNYYRNVLDTMPVLLIDDVIRELDVKRREYFVDLVINAGQAFFTTTDLEGIQDYVGKLKDQKQIFLIQQGNIQFAK.

An ATP-binding site is contributed by 30–37 (GDNGEGKT).

It belongs to the RecF family.

It localises to the cytoplasm. In terms of biological role, the RecF protein is involved in DNA metabolism; it is required for DNA replication and normal SOS inducibility. RecF binds preferentially to single-stranded, linear DNA. It also seems to bind ATP. In Leptospira borgpetersenii serovar Hardjo-bovis (strain JB197), this protein is DNA replication and repair protein RecF.